We begin with the raw amino-acid sequence, 319 residues long: Cobalamin biosynthesis protein CobD (319 aa).

The next 4 membrane-spanning stretches (helical) occupy residues 55 to 75 (AVMWLVVVGVTWAVSWGVLAL), 78 to 98 (EIHPWFGWLVEIWMIFTVLAG), 153 to 173 (VDGIIAPLFFLFLGGAPLAMA), and 296 to 316 (LMWVASTLALALFIAVRCLLV).

Belongs to the CobD/CbiB family.

Its subcellular location is the cell membrane. It participates in cofactor biosynthesis; adenosylcobalamin biosynthesis. Its function is as follows. Converts cobyric acid to cobinamide by the addition of aminopropanol on the F carboxylic group. This Citrobacter koseri (strain ATCC BAA-895 / CDC 4225-83 / SGSC4696) protein is Cobalamin biosynthesis protein CobD.